Reading from the N-terminus, the 337-residue chain is Hsp90 co-chaperone Cdc37-like 1 (337 aa).

Over residues 1–11 the composition is skewed to pro residues; that stretch reads MEQPWPPPGPW. Positions 1-40 are disordered; it reads MEQPWPPPGPWSLPRAEGEAEEESDFDVFPSSPRCPQLPG. The tract at residues 2–171 is self-association; the sequence is EQPWPPPGPW…YEQKIRHFGM (170 aa). Phosphoserine is present on residues serine 32 and serine 88. Positions 84-122 form a coiled coil; sequence HNSESLDQEHAKAQTAVSELRQREEEWRQKEEALVQREK. The segment at 147 to 277 is self-association and interaction with Hsp90; sequence KDTEDEDKSE…SRVRLYSQSQ (131 aa). The tract at residues 267 to 337 is interaction with Hsp70; it reads KSRVRLYSQS…DDEPKMMDTV (71 aa). Residues 278–337 form a required for interaction with STIP1 region; that stretch reads SFQPMTVQNHVPHSGVGSIGLLESLPQNPDYLQYSISTALCSLNSVVHKEDDEPKMMDTV.

This sequence belongs to the CDC37 family. In terms of assembly, self-associates. Forms complexes with Hsp70 and Hsp90. Interacts with CDC37, FKBP4, PPID and STIP1. Expressed in brain, heart, kidney, liver, placenta and skeletal muscle.

It is found in the cytoplasm. Functionally, co-chaperone that binds to numerous proteins and promotes their interaction with Hsp70 and Hsp90. This is Hsp90 co-chaperone Cdc37-like 1 (CDC37L1) from Homo sapiens (Human).